A 728-amino-acid chain; its full sequence is Elongation factor 2 (728 aa).

The region spanning 19-261 (EQIRNIAIAA…MVAEHFPNPI (243 aa)) is the tr-type G domain. Residues 28-35 (AHVDHGKT), 94-98 (DTPGH), and 148-151 (NKVD) each bind GTP. At His-596 the chain carries Diphthamide.

It belongs to the TRAFAC class translation factor GTPase superfamily. Classic translation factor GTPase family. EF-G/EF-2 subfamily.

It localises to the cytoplasm. In terms of biological role, catalyzes the GTP-dependent ribosomal translocation step during translation elongation. During this step, the ribosome changes from the pre-translocational (PRE) to the post-translocational (POST) state as the newly formed A-site-bound peptidyl-tRNA and P-site-bound deacylated tRNA move to the P and E sites, respectively. Catalyzes the coordinated movement of the two tRNA molecules, the mRNA and conformational changes in the ribosome. This chain is Elongation factor 2, found in Halobacterium salinarum (strain ATCC 29341 / DSM 671 / R1).